Consider the following 455-residue polypeptide: MGSHVIDLVMLRNNFSTAEMRAIWNDEARITKQLAVEAALAQAEGELGLIPKEAAKKIAKVAKETTFDIAAIAEQVAVLKHSLMPTINALQAAAGDEGEFVHYGATTQDIVDTGTVLQLKDAYNIVLRDTQVVFEKLAKLAKHYQNVPMVGRTHGMQALPITFGYKLAIWVDEFGRHLERLHEIKERVFTGNINGAVGSYASFGPKGSEVERQTLAILDLNAPTIGWQSSRDRFSEYASVIGLISATLGKIGNEFYNLMRTEINEIEEPFSKGKIGSSTMPHKRNPAAFEGLASLTPPVLKSVALIHESMHVEHERDAMSWRQEWVALPEMNAYVSAQLAILANVLDGLQVKEAVMARNLEKQHGLLLSEKVMFEVGQKLGKQTAHHLVYECAMTSFEEERPFIDTLFEQAAIADTYARAEVEQWLDPTQYTGLCADKVDEVLAAWQTKGFLKEG.

106–107 (TT) is a fumarate binding site. The active-site Proton donor/acceptor is the His-154. Arg-233 contributes to the fumarate binding site. The active-site Proton donor/acceptor is Ser-277. Fumarate is bound by residues Ser-278 and 283-285 (KRN).

It belongs to the lyase 1 family.

It carries out the reaction N-acetyl-S-(2-succino)-L-cysteine = N-acetyl-L-cysteine + fumarate. It participates in amino-acid biosynthesis; L-cysteine biosynthesis. Its function is as follows. Catalyzes the cleavage of N-acetyl-S-(2-succino)cysteine into fumarate and N-acetylcysteine. Is involved in a S-(2-succino)cysteine (2SC) degradation pathway that allows the bacterium to recover cysteine from 2SC and to detoxify 2SC that may be a toxic metabolite. Can also perform the reverse reaction in vitro, and has minor activity against 2SC and other small molecule thiols. This chain is N-acetyl-S-(2-succino)cysteine lyase, found in Enterococcus italicus (strain DSM 15952 / CCUG 50447 / LMG 22039 / TP 1.5).